The primary structure comprises 467 residues: Zinc finger protein 410 (467 aa).

Disordered stretches follow at residues 84–111 and 187–214; these read PDGE…SLLQ and NAKT…PLPQ. C2H2-type zinc fingers lie at residues 219 to 243, 249 to 273, 279 to 303, 309 to 333, and 339 to 362; these read LKCT…LKTH, FICP…MRTH, FVCP…LRIH, FLCE…LVVH, and HQCQ…RKHH. Zn(2+) contacts are provided by C221, C226, H239, H243, C251, C256, H269, H273, C281, C286, H299, H303, C311, C316, H329, H333, C341, C344, H357, and H361.

In terms of assembly, interacts with CDKN2A/p14ARF. O-glycosylated. O-GlcNAcylation may occur in response to increasing glucose levels and affect transcription factor activity. In terms of processing, sumoylated. Sumoylation increases its half-life, possibly by blocking ubiquitin-mediated degradation.

The protein resides in the nucleus. It localises to the chromosome. Functionally, transcription factor that binds to the sequence motif 5'-CATCCCATAATA-3', and is specifically required to silence expression of fetal hemoglobin in adult erythroid cells. Prevents expression of fetal hemoglobin genes HBG1 and HBG2 through CHD4: acts as a direct transcriptional activator of CHD4, a central component of the NuRD complex that represses transcription of fetal hemoglobin genes HBG1 and HBG2 in erythroid cells. May also activate transcription of matrix-remodeling genes such as MMP1 during fibroblast senescence. May activate transcription of the gap junction gene GJC1, perhaps in response to increasing glucose. However, recent studies suggest that ZNF410 is dedicated to regulate expression of a single gene: CHD4. This Bos taurus (Bovine) protein is Zinc finger protein 410.